Reading from the N-terminus, the 428-residue chain is 5'-deoxyadenosine deaminase (428 aa).

Residues His-59 and His-61 each contribute to the Zn(2+) site. Glu-88 and His-180 together coordinate substrate. Position 207 (His-207) interacts with Zn(2+). Substrate contacts are provided by Glu-210 and Asp-296. Asp-296 lines the Zn(2+) pocket.

It belongs to the metallo-dependent hydrolases superfamily. MTA/SAH deaminase family. As to quaternary structure, homotetramer. Zn(2+) is required as a cofactor.

It catalyses the reaction 5'-deoxyadenosine + H2O + H(+) = 5'-deoxyinosine + NH4(+). It carries out the reaction S-adenosyl-L-homocysteine + H2O + H(+) = S-inosyl-L-homocysteine + NH4(+). The enzyme catalyses S-methyl-5'-thioadenosine + H2O + H(+) = S-methyl-5'-thioinosine + NH4(+). The catalysed reaction is adenosine + H2O + H(+) = inosine + NH4(+). The protein operates within amino-acid biosynthesis; S-adenosyl-L-methionine biosynthesis. Catalyzes the deamination of three SAM-derived enzymatic products, namely 5'-deoxyadenosine, S-adenosyl-L-homocysteine, and 5'-methylthioadenosine, to produce the inosine analogs. Can also deaminate adenosine. The preferred substrate for this enzyme is 5'-deoxyadenosine, but all these substrates are efficiently deaminated. Likely functions in a S-adenosyl-L-methionine (SAM) recycling pathway from S-adenosyl-L-homocysteine (SAH) produced from SAM-dependent methylation reactions. May also be involved in the recycling of 5'-deoxyadenosine, whereupon the 5'-deoxyribose moiety of 5'-deoxyinosine is further metabolized to deoxyhexoses used for the biosynthesis of aromatic amino acids in methanogens. This is 5'-deoxyadenosine deaminase from Methanococcus aeolicus (strain ATCC BAA-1280 / DSM 17508 / OCM 812 / Nankai-3).